Reading from the N-terminus, the 393-residue chain is NAD(P)H-quinone oxidoreductase subunit H, chloroplastic (393 aa).

The protein belongs to the complex I 49 kDa subunit family. As to quaternary structure, NDH is composed of at least 16 different subunits, 5 of which are encoded in the nucleus.

It localises to the plastid. The protein localises to the chloroplast thylakoid membrane. The catalysed reaction is a plastoquinone + NADH + (n+1) H(+)(in) = a plastoquinol + NAD(+) + n H(+)(out). It carries out the reaction a plastoquinone + NADPH + (n+1) H(+)(in) = a plastoquinol + NADP(+) + n H(+)(out). Its function is as follows. NDH shuttles electrons from NAD(P)H:plastoquinone, via FMN and iron-sulfur (Fe-S) centers, to quinones in the photosynthetic chain and possibly in a chloroplast respiratory chain. The immediate electron acceptor for the enzyme in this species is believed to be plastoquinone. Couples the redox reaction to proton translocation, and thus conserves the redox energy in a proton gradient. The protein is NAD(P)H-quinone oxidoreductase subunit H, chloroplastic of Carica papaya (Papaya).